A 1140-amino-acid chain; its full sequence is Centrosomal protein of 135 kDa (1140 aa).

Residues 11-64 (NIRKRLDQLGYRQTLTVECLPLVEKLFSDLVHTTESLRQSKLSAVKAEKESANF) form a homodimerization region. 2 coiled-coil regions span residues 75-151 (NARL…KNLH) and 199-416 (LQVA…FAVT). 2 positions are modified to phosphoserine: Ser383 and Ser439. 3 coiled-coil regions span residues 447-644 (LKGI…LENK), 668-1036 (SLRI…LESL), and 1079-1113 (NTML…AIQE). A Phosphoserine modification is found at Ser688. The interval 1114–1140 (MRRHGLATPPLSSTLRSPSHSPEHRNV) is disordered. Thr1121 carries the post-translational modification Phosphothreonine. Residues 1121 to 1133 (TPPLSSTLRSPSH) show a composition bias toward low complexity. Ser1130 is subject to Phosphoserine.

Belongs to the CEP135/TSGA10 family. As to quaternary structure, homodimer. Interacts with DCTN2. Interacts with CEP250.

The protein resides in the cytoplasm. It is found in the cytoskeleton. The protein localises to the microtubule organizing center. It localises to the centrosome. Its subcellular location is the centriole. Centrosomal microtubule-binding protein involved in centriole biogenesis. Acts as a scaffolding protein during early centriole biogenesis. Required for the targeting of centriole satellite proteins to centrosomes such as of PCM1, SSX2IP and CEP290 and recruitment of WRAP73 to centrioles. Also required for centriole-centriole cohesion during interphase by acting as a platform protein for CEP250 at the centriole. Required for the recruitment of CEP295 to the proximal end of new-born centrioles at the centriolar microtubule wall during early S phase in a PLK4-dependent manner. The sequence is that of Centrosomal protein of 135 kDa from Homo sapiens (Human).